The chain runs to 591 residues: V-type ATP synthase alpha chain (591 aa).

233–240 (GPFGAGKT) is a binding site for ATP.

It belongs to the ATPase alpha/beta chains family.

It catalyses the reaction ATP + H2O + 4 H(+)(in) = ADP + phosphate + 5 H(+)(out). Produces ATP from ADP in the presence of a proton gradient across the membrane. The V-type alpha chain is a catalytic subunit. The protein is V-type ATP synthase alpha chain of Streptococcus pneumoniae (strain ATCC 700669 / Spain 23F-1).